We begin with the raw amino-acid sequence, 205 residues long: Large ribosomal subunit protein uL4 (205 aa).

Positions 54 to 78 (GDISGTTAKPHRQKHTGRARQGSLR) are disordered. Basic residues predominate over residues 62-71 (KPHRQKHTGR).

This sequence belongs to the universal ribosomal protein uL4 family. Part of the 50S ribosomal subunit.

Functionally, one of the primary rRNA binding proteins, this protein initially binds near the 5'-end of the 23S rRNA. It is important during the early stages of 50S assembly. It makes multiple contacts with different domains of the 23S rRNA in the assembled 50S subunit and ribosome. Forms part of the polypeptide exit tunnel. In Ehrlichia chaffeensis (strain ATCC CRL-10679 / Arkansas), this protein is Large ribosomal subunit protein uL4.